Consider the following 205-residue polypeptide: H/ACA ribonucleoprotein complex subunit GAR1 (205 aa).

Residues 1–23 (MSFRGGNRGGRGGFRGGFRGGRT) show a composition bias toward gly residues. A disordered region spans residues 1–31 (MSFRGGNRGGRGGFRGGFRGGRTGSARSFQQ). Arginine 4 is modified (asymmetric dimethylarginine; by HMT1). The RGG-box 1 stretch occupies residues 4–21 (RGGNRGGRGGFRGGFRGG). An Asymmetric dimethylarginine; by HMT1; alternate modification is found at arginine 8. Position 8 is an omega-N-methylarginine; by HMT1; alternate (arginine 8). An Asymmetric dimethylarginine; by HMT1 modification is found at arginine 11. An Asymmetric dimethylarginine; by HMT1; alternate modification is found at arginine 15. Arginine 15 is subject to Omega-N-methylarginine; by HMT1; alternate. Arginine 19 is modified (asymmetric dimethylarginine; by HMT1). Lysine 77 participates in a covalent cross-link: Glycyl lysine isopeptide (Lys-Gly) (interchain with G-Cter in ubiquitin). A disordered region spans residues 124–205 (PKPKVVGPPK…SRGGFRGGRR (82 aa)). Gly residues predominate over residues 143–205 (APGGRGGASM…SRGGFRGGRR (63 aa)). Asymmetric dimethylarginine; by HMT1; alternate occurs at positions 147, 154, and 158. Arginine 147, arginine 154, and arginine 158 each carry omega-N-methylarginine; by HMT1; alternate. Residues 147-205 (RGGASMGRGGSRGGFRGGRGGSSFRGGRGGSSFRGGSRGGSFRGGSRGGSRGGFRGGRR) are RGG-box 2. Position 162 is an asymmetric dimethylarginine; by HMT1 (arginine 162). Residue arginine 165 is modified to Asymmetric dimethylarginine; by HMT1; alternate. Arginine 165 is modified (omega-N-methylarginine; by HMT1; alternate). Asymmetric dimethylarginine; by HMT1 is present on residues arginine 171 and arginine 174. 2 positions are modified to omega-N-methylarginine; by HMT1: arginine 180 and arginine 184. Arginine 189 carries the asymmetric dimethylarginine; by HMT1; alternate modification. Residue arginine 189 is modified to Omega-N-methylarginine; by HMT1; alternate. Residues arginine 193, arginine 197, and arginine 201 each carry the asymmetric dimethylarginine; by HMT1 modification.

It belongs to the GAR1 family. Component of the small nucleolar ribonucleoprotein particles containing H/ACA-type snoRNAs (H/ACA snoRNPs). The protein component of the H/ACA snoRNP contains CBF5, GAR1, NHP2 and NOP10. The complex contains a stable core composed of CBF5 and NOP10, to which GAR1 and NHP2 subsequently bind. Interacts with snoRNAs. In terms of processing, methylated by HMT1, forming asymmetric dimethylarginines (DMA) within a domain referred to as an RGG box, made up of repeated Gly-Gly dipeptides interspersed with Arg and aromatic residues.

The protein localises to the nucleus. The protein resides in the nucleolus. In terms of biological role, non-catalytic component of the H/ACA small nucleolar ribonucleoprotein (H/ACA snoRNP), which catalyzes pseudouridylation of rRNA and is required for ribosome biogenesis. This involves the isomerization of uridine such that the ribose is subsequently attached to C5, instead of the normal N1. Pseudouridine ('psi') residues may serve to stabilize the conformation of rRNAs. The H/ACA snoRNP complex also mediates pseudouridylation of other types of RNAs. The H/ACA snoRNP complex mediates pseudouridylation at position 93 in U2 snRNA. Essential for growth. The sequence is that of H/ACA ribonucleoprotein complex subunit GAR1 from Saccharomyces cerevisiae (strain ATCC 204508 / S288c) (Baker's yeast).